A 245-amino-acid polypeptide reads, in one-letter code: SPX domain-containing protein 3 (245 aa).

Positions 1–142 (MKFGKRIKEQ…RGGLRSPFIQ (142 aa)) constitute an SPX domain.

Its function is as follows. Plays a positive role in plant adaptation to phosphate starvation and exerts negative feedback regulation of SPX1. This Arabidopsis thaliana (Mouse-ear cress) protein is SPX domain-containing protein 3 (SPX3).